Here is a 497-residue protein sequence, read N- to C-terminus: Probable cytosol aminopeptidase (497 aa).

Mn(2+) is bound by residues K267 and D272. The active site involves K279. 3 residues coordinate Mn(2+): D290, D349, and E351. Residue R353 is part of the active site.

It belongs to the peptidase M17 family. Mn(2+) is required as a cofactor.

The protein localises to the cytoplasm. The enzyme catalyses Release of an N-terminal amino acid, Xaa-|-Yaa-, in which Xaa is preferably Leu, but may be other amino acids including Pro although not Arg or Lys, and Yaa may be Pro. Amino acid amides and methyl esters are also readily hydrolyzed, but rates on arylamides are exceedingly low.. It catalyses the reaction Release of an N-terminal amino acid, preferentially leucine, but not glutamic or aspartic acids.. Presumably involved in the processing and regular turnover of intracellular proteins. Catalyzes the removal of unsubstituted N-terminal amino acids from various peptides. The polypeptide is Probable cytosol aminopeptidase (Nitrosomonas eutropha (strain DSM 101675 / C91 / Nm57)).